A 730-amino-acid polypeptide reads, in one-letter code: MNSLWPVSVSHTQLTSINHQVYVHPTPSSKDNIPGFLALAKPRGATTDKEILVAWIPESKLQESAADFESYVKVDIKESGTPASSSLNLAETLVSPPPSSSFSSYAFSIPISDIFSLQVKQPSLGWWWGSITIHTRSKEDQLPPLYFHDAESQSTIMEQKRRNKKFETFDSESGSSMFWGGDHFIQVLSKYANLERAESDHSFLLVNPREGDAERFGTNLTGGSEEPSQLVAGIPGRGAGGDPVDRGAQVQKAFSDIRWGLLSNLAKVTQLTRKVSQGVWDSSPQPVKQLLMKPEVKKIGDDFDSARIYLAKWALSVAEESQRAKLKVLFDDELRELVSDEGFELIDAENNPQRRNEVSLAEWNAFFDYNGRLIVTVNEVKERIFHGGLAPAVRPEGWLFLLGVYPWDSTAAERKELVSKLRVDYNRLKKEWWVQEDKERDDFWRDQLSRIEKDVHRTDRNITFFAECDAKKDGDDDNYDKDEFGFSSQINSNIHLIQLRDMLITYNQHNKNLGYVQGMSDLLSPLYVVLQDDTLAFWAFSAFMERMERNYLRDQSGMRNQLLCLDHLVQFMLPSLYKHLEKTESTNLFFFFRMLLVWFKRELLWDDVLRLWEVLWTDYLSSQFVLFVCLAILDKHKDVMIDHLAGFDEILKYMNELSMTIDLDELLVRAELLFYRFRRTVELIDRKNEDRRNSADGSEPVSITEDLRELLSRKVIVVREGERPEGVMGG.

The 186-residue stretch at 434–619 (VQEDKERDDF…RLWEVLWTDY (186 aa)) folds into the Rab-GAP TBC domain.

In terms of biological role, most effectively accelerate the intrinsic GTPase activity of YPT7. It is also active, but to a lesser extent, on YPT31, YPT32 and YPT1. YPT6 and SEC4. The sequence is that of GTPase-activating protein GYP7 (GYP7) from Yarrowia lipolytica (strain CLIB 122 / E 150) (Yeast).